Here is a 365-residue protein sequence, read N- to C-terminus: Flagellar P-ring protein 2 (365 aa).

The signal sequence occupies residues 1-19 (MKKWIVMASLLLAALPAMS).

The protein belongs to the FlgI family. The basal body constitutes a major portion of the flagellar organelle and consists of four rings (L,P,S, and M) mounted on a central rod.

The protein localises to the periplasm. It localises to the bacterial flagellum basal body. In terms of biological role, assembles around the rod to form the L-ring and probably protects the motor/basal body from shearing forces during rotation. The polypeptide is Flagellar P-ring protein 2 (Chromobacterium violaceum (strain ATCC 12472 / DSM 30191 / JCM 1249 / CCUG 213 / NBRC 12614 / NCIMB 9131 / NCTC 9757 / MK)).